The sequence spans 154 residues: Crossover junction endodeoxyribonuclease RuvC (154 aa).

Residues Asp7, Glu67, and Asp139 contribute to the active site. Mg(2+) is bound by residues Asp7, Glu67, and Asp139.

It belongs to the RuvC family. In terms of assembly, homodimer which binds Holliday junction (HJ) DNA. The HJ becomes 2-fold symmetrical on binding to RuvC with unstacked arms; it has a different conformation from HJ DNA in complex with RuvA. In the full resolvosome a probable DNA-RuvA(4)-RuvB(12)-RuvC(2) complex forms which resolves the HJ. Requires Mg(2+) as cofactor.

It is found in the cytoplasm. It catalyses the reaction Endonucleolytic cleavage at a junction such as a reciprocal single-stranded crossover between two homologous DNA duplexes (Holliday junction).. Its function is as follows. The RuvA-RuvB-RuvC complex processes Holliday junction (HJ) DNA during genetic recombination and DNA repair. Endonuclease that resolves HJ intermediates. Cleaves cruciform DNA by making single-stranded nicks across the HJ at symmetrical positions within the homologous arms, yielding a 5'-phosphate and a 3'-hydroxyl group; requires a central core of homology in the junction. The consensus cleavage sequence is 5'-(A/T)TT(C/G)-3'. Cleavage occurs on the 3'-side of the TT dinucleotide at the point of strand exchange. HJ branch migration catalyzed by RuvA-RuvB allows RuvC to scan DNA until it finds its consensus sequence, where it cleaves and resolves the cruciform DNA. The sequence is that of Crossover junction endodeoxyribonuclease RuvC from Prochlorococcus marinus (strain NATL2A).